The following is a 447-amino-acid chain: Glutamyl-tRNA reductase (447 aa).

Substrate is bound by residues 56 to 59 (TCNR), serine 119, 124 to 126 (ETQ), and glutamine 130. Cysteine 57 serves as the catalytic Nucleophile. 201-206 (GLGEMS) is a binding site for NADP(+).

Belongs to the glutamyl-tRNA reductase family. Homodimer.

The catalysed reaction is (S)-4-amino-5-oxopentanoate + tRNA(Glu) + NADP(+) = L-glutamyl-tRNA(Glu) + NADPH + H(+). It functions in the pathway porphyrin-containing compound metabolism; protoporphyrin-IX biosynthesis; 5-aminolevulinate from L-glutamyl-tRNA(Glu): step 1/2. In terms of biological role, catalyzes the NADPH-dependent reduction of glutamyl-tRNA(Glu) to glutamate 1-semialdehyde (GSA). The sequence is that of Glutamyl-tRNA reductase from Helicobacter acinonychis (strain Sheeba).